Consider the following 666-residue polypeptide: Long chain acyl-CoA synthetase 5 (666 aa).

228–239 (IMYTSGTTGDPK) lines the ATP pocket. The tract at residues 495–519 (DGWLHTGDVGEWQPNGSMKIIDRKK) is fatty acid-binding.

Belongs to the ATP-dependent AMP-binding enzyme family. It depends on Mg(2+) as a cofactor.

The enzyme catalyses a long-chain fatty acid + ATP + CoA = a long-chain fatty acyl-CoA + AMP + diphosphate. Its pathway is lipid metabolism; fatty acid metabolism. In terms of biological role, activation of long-chain fatty acids for both synthesis of cellular lipids, and degradation via beta-oxidation. Preferentially uses palmitate, palmitoleate, oleate and linoleate. The protein is Long chain acyl-CoA synthetase 5 (LACS5) of Arabidopsis thaliana (Mouse-ear cress).